A 125-amino-acid chain; its full sequence is Small ribosomal subunit protein eS8 (125 aa).

The disordered stretch occupies residues 1–35 (MQWQGRSVRKPSGGRYHTSQGKKRTEIGRAPAETH).

This sequence belongs to the eukaryotic ribosomal protein eS8 family. Part of the 30S ribosomal subunit.

The sequence is that of Small ribosomal subunit protein eS8 from Methanoculleus marisnigri (strain ATCC 35101 / DSM 1498 / JR1).